Here is a 251-residue protein sequence, read N- to C-terminus: Urease accessory protein UreF (251 aa).

The disordered stretch occupies residues 1-20 (MAPAPDPAPAGSAAPDPASA). Over residues 9 to 20 (PAGSAAPDPASA) the composition is skewed to low complexity.

Belongs to the UreF family. UreD, UreF and UreG form a complex that acts as a GTP-hydrolysis-dependent molecular chaperone, activating the urease apoprotein by helping to assemble the nickel containing metallocenter of UreC. The UreE protein probably delivers the nickel.

The protein resides in the cytoplasm. Functionally, required for maturation of urease via the functional incorporation of the urease nickel metallocenter. The protein is Urease accessory protein UreF of Paracidovorax citrulli (strain AAC00-1) (Acidovorax citrulli).